We begin with the raw amino-acid sequence, 638 residues long: LIM domain kinase 2 (638 aa).

LIM zinc-binding domains are found at residues 12-63 and 72-124; these read CRGC…CHKD and CHGC…CGKC. One can recognise a PDZ domain in the interval 152–239; the sequence is LISMPATTEC…TLQLLIEHDP (88 aa). Thr210 is subject to Phosphothreonine. Residues 255–304 are disordered; the sequence is PHMQSTGHTLMLSTLDTKENQEGTLRRRSLRRSNSISKSPGPSSPKEPLL. The segment covering 257 to 269 has biased composition (polar residues); it reads MQSTGHTLMLSTL. Basic and acidic residues predominate over residues 270-279; it reads DTKENQEGTL. Residues 286-304 are compositionally biased toward low complexity; it reads RSNSISKSPGPSSPKEPLL. Phosphoserine occurs at positions 293 and 298. The Protein kinase domain occupies 331-608; it reads LIHGEVLGKG…DSFEALSLFL (278 aa). ATP is bound by residues 337–345 and Lys360; that span reads LGKGFFGQA. Asp451 is a catalytic residue. Phosphothreonine; by ROCK1 and CDC42BP is present on Thr505.

Belongs to the protein kinase superfamily. TKL Ser/Thr protein kinase family. Binds ROCK1 and MARF1. Interacts with NISCH. In terms of processing, phosphorylated on serine and/or threonine residues by ROCK1. In terms of tissue distribution, specifically expressed in the testes.

The protein resides in the cytoplasm. Its subcellular location is the cytoskeleton. It is found in the spindle. It localises to the microtubule organizing center. The protein localises to the centrosome. The protein resides in the nucleus. Its subcellular location is the perinuclear region. It catalyses the reaction L-seryl-[protein] + ATP = O-phospho-L-seryl-[protein] + ADP + H(+). It carries out the reaction L-threonyl-[protein] + ATP = O-phospho-L-threonyl-[protein] + ADP + H(+). Serine/threonine-protein kinase that plays an essential role in the regulation of actin filament dynamics. Acts downstream of several Rho family GTPase signal transduction pathways. Involved in astral microtubule organization and mitotic spindle orientation during early stages of mitosis by mediating phosphorylation of TPPP. Displays serine/threonine-specific phosphorylation of myelin basic protein and histone (MBP) in vitro. Suppresses ciliogenesis via multiple pathways; phosphorylation of CFL1, suppression of directional trafficking of ciliary vesicles to the ciliary base, and by facilitating YAP1 nuclear localization where it acts as a transcriptional corepressor of the TEAD4 target genes AURKA and PLK1. The chain is LIM domain kinase 2 (Limk2) from Mus musculus (Mouse).